The sequence spans 851 residues: DNA mismatch repair protein MutS (851 aa).

Residue 614 to 621 (GPNMGGKS) participates in ATP binding.

The protein belongs to the DNA mismatch repair MutS family.

Functionally, this protein is involved in the repair of mismatches in DNA. It is possible that it carries out the mismatch recognition step. This protein has a weak ATPase activity. The protein is DNA mismatch repair protein MutS of Serratia proteamaculans (strain 568).